The sequence spans 298 residues: Possible hemolysin C (298 aa).

CBS domains are found at residues 80–141 (MVPR…QNGC) and 145–202 (LIRK…IDDE).

This sequence belongs to the UPF0053 family. Hemolysin C subfamily.

The chain is Possible hemolysin C (tlyC) from Rickettsia canadensis (strain McKiel).